The chain runs to 605 residues: MAEDWLDCPALGPGWKRREVFRKSGATCGRSDTYYQSPTGDRIRSKVELTRYLGPACDLTLFDFKQGILCYPAPKAHPVAVASKKRKKPSRPAKTRKRQVGPQSGEVRKEAPRDETKADTDTAPASFPAPGCCENCGISFSGDGTQRQRLKTLCKDCRAQRIAFNREQRMFKRVGCGECAACQVTEDCGACSTCLLQLPHDVASGLFCKCERRRCLRIVERSRGCGVCRGCQTQEDCGHCPICLRPPRPGLRRQWKCVQRRCLRGKHARRKGGCDSKMAARRRPGAQPLPPPPPSQSPEPTEPHPRALAPSPPAEFIYYCVDEDELQPYTNRRQNRKCGACAACLRRMDCGRCDFCCDKPKFGGSNQKRQKCRWRQCLQFAMKRLLPSVWSESEDGAGSPPPYRRRKRPSSARRHHLGPTLKPTLATRTAQPDHTQAPTKQEAGGGFVLPPPGTDLVFLREGASSPVQVPGPVAASTEALLQEAQCSGLSWVVALPQVKQEKADTQDEWTPGTAVLTSPVLVPGCPSKAVDPGLPSVKQEPPDPEEDKEENKDDSASKLAPEEEAGGAGTPVITEIFSLGGTRFRDTAVWLPRSKDLKKPGARKQ.

The region spanning 1–69 is the MBD domain; that stretch reads MAEDWLDCPA…TLFDFKQGIL (69 aa). Residues 80–123 are disordered; the sequence is AVASKKRKKPSRPAKTRKRQVGPQSGEVRKEAPRDETKADTDTA. Positions 83–99 are enriched in basic residues; sequence SKKRKKPSRPAKTRKRQ. The Nuclear localization signal signature appears at 84-88; it reads KKRKK. Over residues 106–120 the composition is skewed to basic and acidic residues; it reads EVRKEAPRDETKADT. Residue K117 forms a Glycyl lysine isopeptide (Lys-Gly) (interchain with G-Cter in SUMO2) linkage. 2 CXXC-type zinc fingers span residues 169–216 and 217–263; these read RMFK…RRCL and RIVE…RRCL. The Zn(2+) site is built by C176, C179, C182, C188, C191, C194, C210, C215, C225, C228, C231, C237, C240, C243, C257, and C262. The interval 269–308 is disordered; sequence RRKGGCDSKMAARRRPGAQPLPPPPPSQSPEPTEPHPRAL. A Glycyl lysine isopeptide (Lys-Gly) (interchain with G-Cter in SUMO2) cross-link involves residue K277. Over residues 287–297 the composition is skewed to pro residues; the sequence is QPLPPPPPSQS. A Phosphoserine modification is found at S297. Residues 330–378 form a CXXC-type 3 zinc finger; that stretch reads TNRRQNRKCGACAACLRRMDCGRCDFCCDKPKFGGSNQKRQKCRWRQCL. Zn(2+) is bound by residues C338, C341, C344, C350, C353, C356, C372, and C377. A phosphoserine mark is found at S391 and S399. Residues 391–451 are disordered; sequence SESEDGAGSP…EAGGGFVLPP (61 aa). Residues 403-417 show a composition bias toward basic residues; the sequence is YRRRKRPSSARRHHL. K422 is covalently cross-linked (Glycyl lysine isopeptide (Lys-Gly) (interchain with G-Cter in SUMO2)). Residues 426-439 are compositionally biased toward polar residues; sequence ATRTAQPDHTQAPT. A Glycyl lysine isopeptide (Lys-Gly) (interchain with G-Cter in SUMO2) cross-link involves residue K440. Glycyl lysine isopeptide (Lys-Gly) (interchain with G-Cter in SUMO2); alternate cross-links involve residues K499 and K538. The disordered stretch occupies residues 520-573; sequence VLVPGCPSKAVDPGLPSVKQEPPDPEEDKEENKDDSASKLAPEEEAGGAGTPVI. The tract at residues 529 to 592 is transcriptional repression domain (TRD); it reads AVDPGLPSVK…RFRDTAVWLP (64 aa). Residue K558 forms a Glycyl lysine isopeptide (Lys-Gly) (interchain with G-Cter in SUMO2) linkage.

Interacts with OASL, ATF7IP, ATF7IP2 and BAHD1. Binds CHAF1A and the SUV39H1-CBX5 complex via the MBD domain. Binds MGP via the TRD domain. May be part of the MeCP1 complex. Post-translationally, sumoylated, sumoylation may increase interaction with ATF7IP. In terms of tissue distribution, widely expressed.

Its subcellular location is the nucleus. It localises to the nucleus matrix. The protein resides in the nucleus speckle. It is found in the chromosome. Functionally, transcriptional repressor that binds CpG islands in promoters where the DNA is methylated at position 5 of cytosine within CpG dinucleotides. Binding is abolished by the presence of 7-mG that is produced by DNA damage by methylmethanesulfonate (MMS). Acts as transcriptional repressor and plays a role in gene silencing by recruiting ATF7IP, which in turn recruits factors such as the histone methyltransferase SETDB1. Probably forms a complex with SETDB1 and ATF7IP that represses transcription and couples DNA methylation and histone 'Lys-9' trimethylation. Isoform 1 and isoform 2 can also repress transcription from unmethylated promoters. The polypeptide is Methyl-CpG-binding domain protein 1 (Homo sapiens (Human)).